Reading from the N-terminus, the 413-residue chain is Exodeoxyribonuclease I (413 aa).

One can recognise an Exonuclease domain in the interval Leu12–Ile193. 3 residues coordinate Mg(2+): Asp15, Glu17, and Asp186. Glu17 contributes to the substrate binding site. One can recognise an ExoI SH3-like domain in the interval Pro202–Asn349. Residues Asn350–His413 enclose the ExoI C-terminal domain.

Monomer. Interacts with ssb (via C-terminus); this interaction stimulates the exonuclease activity by recruiting the enzyme to its substrate. Requires Mg(2+) as cofactor.

It carries out the reaction Exonucleolytic cleavage in the 3'- to 5'-direction to yield nucleoside 5'-phosphates.. In terms of biological role, degrades single-stranded DNA (ssDNA) in a highly processive manner. Also functions as a DNA deoxyribophosphodiesterase that releases deoxyribose-phosphate moieties following the cleavage of DNA at an apurinic/apyrimidinic (AP) site by either an AP endonuclease or AP lyase. The sequence is that of Exodeoxyribonuclease I (sbcB) from Buchnera aphidicola subsp. Acyrthosiphon pisum (strain APS) (Acyrthosiphon pisum symbiotic bacterium).